Here is a 692-residue protein sequence, read N- to C-terminus: Elongation factor G (692 aa).

The region spanning 8 to 282 (PNTRNIGIMA…NVVAYLPSPV (275 aa)) is the tr-type G domain. GTP is bound by residues 17 to 24 (AHIDAGKT), 81 to 85 (DTPGH), and 135 to 138 (NKMD).

The protein belongs to the TRAFAC class translation factor GTPase superfamily. Classic translation factor GTPase family. EF-G/EF-2 subfamily.

It localises to the cytoplasm. Its function is as follows. Catalyzes the GTP-dependent ribosomal translocation step during translation elongation. During this step, the ribosome changes from the pre-translocational (PRE) to the post-translocational (POST) state as the newly formed A-site-bound peptidyl-tRNA and P-site-bound deacylated tRNA move to the P and E sites, respectively. Catalyzes the coordinated movement of the two tRNA molecules, the mRNA and conformational changes in the ribosome. This is Elongation factor G from Brevibacillus brevis (strain 47 / JCM 6285 / NBRC 100599).